Reading from the N-terminus, the 234-residue chain is 2-C-methyl-D-erythritol 4-phosphate cytidylyltransferase (234 aa).

It belongs to the IspD/TarI cytidylyltransferase family. IspD subfamily.

The enzyme catalyses 2-C-methyl-D-erythritol 4-phosphate + CTP + H(+) = 4-CDP-2-C-methyl-D-erythritol + diphosphate. It functions in the pathway isoprenoid biosynthesis; isopentenyl diphosphate biosynthesis via DXP pathway; isopentenyl diphosphate from 1-deoxy-D-xylulose 5-phosphate: step 2/6. Its function is as follows. Catalyzes the formation of 4-diphosphocytidyl-2-C-methyl-D-erythritol from CTP and 2-C-methyl-D-erythritol 4-phosphate (MEP). The protein is 2-C-methyl-D-erythritol 4-phosphate cytidylyltransferase of Thermosynechococcus vestitus (strain NIES-2133 / IAM M-273 / BP-1).